A 60-amino-acid polypeptide reads, in one-letter code: Large ribosomal subunit protein bL32 (60 aa).

The span at 1-16 shows a compositional bias: basic residues; sequence MAVPKRKTTPSKRGMR. Residues 1–34 form a disordered region; the sequence is MAVPKRKTTPSKRGMRRAHDALSSPVYIEDKDSG.

The protein belongs to the bacterial ribosomal protein bL32 family.

The polypeptide is Large ribosomal subunit protein bL32 (Maricaulis maris (strain MCS10) (Caulobacter maris)).